The following is a 428-amino-acid chain: UDP-N-acetylglucosamine 1-carboxyvinyltransferase 2 (428 aa).

Residue K22–N23 participates in phosphoenolpyruvate binding. UDP-N-acetyl-alpha-D-glucosamine is bound at residue R92. Residue C116 is the Proton donor of the active site. At C116 the chain carries 2-(S-cysteinyl)pyruvic acid O-phosphothioketal. UDP-N-acetyl-alpha-D-glucosamine contacts are provided by residues R121–Q125, D304, and I326.

Belongs to the EPSP synthase family. MurA subfamily.

The protein localises to the cytoplasm. It catalyses the reaction phosphoenolpyruvate + UDP-N-acetyl-alpha-D-glucosamine = UDP-N-acetyl-3-O-(1-carboxyvinyl)-alpha-D-glucosamine + phosphate. The protein operates within cell wall biogenesis; peptidoglycan biosynthesis. Its function is as follows. Cell wall formation. Adds enolpyruvyl to UDP-N-acetylglucosamine. In Oceanobacillus iheyensis (strain DSM 14371 / CIP 107618 / JCM 11309 / KCTC 3954 / HTE831), this protein is UDP-N-acetylglucosamine 1-carboxyvinyltransferase 2.